The primary structure comprises 652 residues: 2',3'-cyclic-nucleotide 2'-phosphodiesterase/3'-nucleotidase (652 aa).

The signal sequence occupies residues 1–24 (MFKRPLTLSLLASLIALTTSTAQA). Residues D36, H38, D81, N121, H230, H262, and H264 each contribute to the a divalent metal cation site. Substrate is bound by residues Y445 and 549-555 (YRAYSGK).

This sequence belongs to the 5'-nucleotidase family. A divalent metal cation is required as a cofactor.

It localises to the periplasm. The enzyme catalyses a nucleoside 2',3'-cyclic phosphate + H2O = a nucleoside 3'-phosphate + H(+). It catalyses the reaction a ribonucleoside 3'-phosphate + H2O = a ribonucleoside + phosphate. Its function is as follows. This bifunctional enzyme catalyzes two consecutive reactions during ribonucleic acid degradation. Converts a 2',3'-cyclic nucleotide to a 3'-nucleotide and then the 3'-nucleotide to the corresponding nucleoside and phosphate. This is 2',3'-cyclic-nucleotide 2'-phosphodiesterase/3'-nucleotidase (cpdB) from Yersinia enterocolitica.